The sequence spans 167 residues: Large ribosomal subunit protein uL15 (167 aa).

Residues 1-10 (MKLNQISDNP) are compositionally biased toward polar residues. Residues 1 to 37 (MKLNQISDNPGATKDRMRVGRGIGSGKGKTAGRGVKG) form a disordered region. The segment covering 21 to 35 (RGIGSGKGKTAGRGV) has biased composition (gly residues).

The protein belongs to the universal ribosomal protein uL15 family. As to quaternary structure, part of the 50S ribosomal subunit.

Binds to the 23S rRNA. The sequence is that of Large ribosomal subunit protein uL15 from Methylobacterium radiotolerans (strain ATCC 27329 / DSM 1819 / JCM 2831 / NBRC 15690 / NCIMB 10815 / 0-1).